The primary structure comprises 192 residues: Ferritin-like protein (192 aa).

Residues His-44, Glu-48, and His-102 each coordinate Fe(3+). The segment at 143–179 (RFDHDYADPHAHHDEHRDHLADMPSAGSSHEEVQPVA) is linker. The span at 149–163 (ADPHAHHDEHRDHLA) shows a compositional bias: basic and acidic residues. A disordered region spans residues 149–192 (ADPHAHHDEHRDHLADMPSAGSSHEEVQPVAHKKKGFTVGSLIQ). Residues 180-192 (HKKKGFTVGSLIQ) are targeting peptide.

In terms of assembly, homodimer, with 2 Fe atoms bound at the subunit interface (without encapsulin), probably also a dimer when encapsulated. 42 electron-dense accretions can be seen inside the nanocompartment which are probably this cargo protein, although perhaps up to one cargo dimer can be bound per shell protein.

It is found in the encapsulin nanocompartment. It carries out the reaction 4 Fe(2+) + O2 + 4 H(+) = 4 Fe(3+) + 2 H2O. In terms of biological role, cargo protein of a type 1 encapsulin nanocompartment. A ferritin-like iron-binding protein probably involved in iron mineralization in the encapsulin nanocompartment. Has ferroxidase activity even when encapsulated, the rate is probably controlled by the rate of Fe flux across the nanocompartment pores. Part of the iron-mineralizing encapsulin-associated Firmicute (IMEF) system. 2 different cargo proteins have been identified (IMEF and Fer); when both are expressed in E.coli with the shell protein only IMEF is detected within the nanocompartment. E.coli expressing all 3 genes stores the largest amount of iron and is protected from Fe/H2O2-induced oxidative stress. The sequence is that of Ferritin-like protein from Bacillus thermotolerans (Quasibacillus thermotolerans).